The sequence spans 815 residues: MEKTPATGSAVAPPPVEYGTDSITKLEGREAVRKRPGMYIGDTMAYGLHKLVYEVVDNAVDESLAGHCTDIEVVIHVDGSLSVQDNGRGIPVGPHPKFPGKDTLEVVLTELHAGSKFGNGAYKVSGGLHGVGVTCVNFLSEWFKVRVHRNGIVYEQAYAQGVPDTPPREVGTTDKRGTHIAFKPDATVMELVEFNFETLSQRLRELAFLNAGLHIVVRDERTNKEHDFKFDGGISSFVEYLNKSKQTLHDKPISFSTEREGVMLDIAMQWNDGYDERIYTFANNINTHEGGSHLSGFKAALTRTLNSYAEKGSLWKDLKETPTGEDAREGLSAVISVKLTNPQFEGQTKTKLGNSEVKGLVEQMVNDQLGSFLEETPMVAKKVVAKIGDACRARLAARKARETVRRKGVLDGGGLPGKLADCQIRDPNESELYIVEGDSAGGSAKQGRDRRNQAILPLRGKILNVEKLLREMLTSAEIVTLITALGNGIGAEDYDPEKARYHRIFLMTDADVDGSHIRTLLLTSSSGRCRSSCRRAISTSRSRRSYKVTRNKKDQYVKDEHALNEYLLKIASEHARVLTPGGELGGAELKALLEKVITYEERLEKQAKRRDARVVDALVQGARLSAETLTGRGCPGGGGEGRLMTPSSAACRTCWAACATSWCRTPSTTPRSWCSTPTRMEPCGRRCSTTPSCRRRSTWSCRLCAEHLRGAGQGAVQGPRGRGEITVFSVQEVLAAVRKDAQRGLGLQRYKGLGEMNPEQLWDTTMNPATRTLLQVRVEDAVESDEIFSLLMGEAVEPRREFIERNALDVQNLDI.

The segment at Met1–Asp21 is disordered. The region spanning Ser430–Ser545 is the Toprim domain. 3 residues coordinate Mg(2+): Glu436, Asp509, and Asp511.

This sequence belongs to the type II topoisomerase GyrB family. Heterotetramer, composed of two GyrA and two GyrB chains. In the heterotetramer, GyrA contains the active site tyrosine that forms a transient covalent intermediate with DNA, while GyrB binds cofactors and catalyzes ATP hydrolysis. It depends on Mg(2+) as a cofactor. Requires Mn(2+) as cofactor. The cofactor is Ca(2+).

Its subcellular location is the cytoplasm. It catalyses the reaction ATP-dependent breakage, passage and rejoining of double-stranded DNA.. Its function is as follows. A type II topoisomerase that negatively supercoils closed circular double-stranded (ds) DNA in an ATP-dependent manner to modulate DNA topology and maintain chromosomes in an underwound state. Negative supercoiling favors strand separation, and DNA replication, transcription, recombination and repair, all of which involve strand separation. Also able to catalyze the interconversion of other topological isomers of dsDNA rings, including catenanes and knotted rings. Type II topoisomerases break and join 2 DNA strands simultaneously in an ATP-dependent manner. The protein is DNA gyrase subunit B of Myxococcus xanthus.